A 127-amino-acid chain; its full sequence is DNA-directed RNA polymerases I, II, and III subunit RPABC2 (127 aa).

Over residues 1-34 the composition is skewed to acidic residues; sequence MSDNEDNFDGDDFDDVEEDEGLDDLENAEEEGQE. The interval 1–53 is disordered; that stretch reads MSDNEDNFDGDDFDDVEEDEGLDDLENAEEEGQENVEILPSGERPQANQKRIT. S2 bears the N-acetylserine mark. A Phosphoserine; by CK2 modification is found at S2.

It belongs to the archaeal Rpo6/eukaryotic RPB6 RNA polymerase subunit family. In terms of assembly, component of the RNA polymerase I (Pol I), RNA polymerase II (Pol II) and RNA polymerase III (Pol III) complexes consisting of at least 13, 12 and 17 subunits, respectively. Pol I complex consists of a ten-subunit catalytic core composed of POLR1A/RPA1, POLR1B/RPA2, POLR1C/RPAC1, POLR1D/RPAC2, POLR1H/RPA12, POLR2E/RPABC1, POLR2F/RPABC2, POLR2H/RPABC3, POLR2K/RPABC4 and POLR2L/RPABC5; a mobile stalk subunit POLR1F/RPA43 protruding from the core and additional subunits homologous to general transcription factors POLR1E/RPA49 and POLR1G/RPA34. Part of Pol I pre-initiation complex (PIC), in which Pol I core assembles with RRN3 and promoter-bound UTBF and SL1/TIF-IB complex. Pol II complex contains a ten-subunit catalytic core composed of POLR2A/RPB1, POLR2B/RPB2, POLR2C/RPB3, POLR2I/RPB9, POLR2J/RPB11, POLR2E/RPABC1, POLR2F/RPABC2, POLR2H/RPABC3, POLR2K/RPABC4 and POLR2L/RPABC5 and a mobile stalk composed of two subunits POLR2D/RPB4 and POLR2G/RPB7. Part of Pol II(G) complex, in which Pol II core associates with an additional subunit POLR2M; unlike conventional Pol II, Pol II(G) functions as a transcriptional repressor. Part of TBP-based Pol II pre-initiation complex (PIC), in which Pol II core assembles with general transcription factors and other specific initiation factors including GTF2E1, GTF2E2, GTF2F1, GTF2F2, TCEA1, ERCC2, ERCC3, GTF2H2, GTF2H3, GTF2H4, GTF2H5, GTF2A1, GTF2A2, GTF2B and TBP; this large multi-subunit PIC complex mediates DNA unwinding and targets Pol II core to the transcription start site where the first phosphodiester bond forms. Pol III complex consists of a ten-subunit catalytic core composed of POLR3A/RPC1, POLR3B/RPC2, POLR1C/RPAC1, POLR1D/RPAC2, POLR3K/RPC10, POLR2E/RPABC1, POLR2F/RPABC2, POLR2H/RPABC3, POLR2K/RPABC4 and POLR2L/RPABC5; a mobile stalk composed of two subunits POLR3H/RPC8 and CRCP/RPC9, protruding from the core and functioning primarily in transcription initiation; and additional subunits homologous to general transcription factors of the RNA polymerase II machinery, POLR3C/RPC3-POLR3F/RPC6-POLR3G/RPC7 heterotrimer required for transcription initiation and POLR3D/RPC4-POLR3E/RPC5 heterodimer involved in both transcription initiation and termination.

It is found in the nucleus. It localises to the nucleolus. Its function is as follows. DNA-dependent RNA polymerase catalyzes the transcription of DNA into RNA using the four ribonucleoside triphosphates as substrates. Common component of RNA polymerases I, II, and III which synthesize ribosomal RNA precursors, mRNA precursors and many functional non-coding RNAs, and small RNAs, such as 5S rRNA and tRNAs, respectively. Pol II is the central component of the basal RNA polymerase II transcription machinery. Pols are composed of mobile elements that move relative to each other. In Pol II, POLR2F/RPABC2 is part of the clamp element and together with parts of POLR2A/RPB1 and POLR2B/RPB2 forms a pocket to which the POLR2D/RPB4-POLR2G/RPB7 subcomplex binds. The chain is DNA-directed RNA polymerases I, II, and III subunit RPABC2 from Mus musculus (Mouse).